A 100-amino-acid polypeptide reads, in one-letter code: Large ribosomal subunit protein bL28 (100 aa).

The interval 1–25 (MTRRCDITGKSVLSGNNVSHANNKS) is disordered. Residues 11-22 (SVLSGNNVSHAN) are compositionally biased toward polar residues.

This sequence belongs to the bacterial ribosomal protein bL28 family.

The chain is Large ribosomal subunit protein bL28 from Acidiphilium cryptum (strain JF-5).